The sequence spans 556 residues: MSVPVSQIPSLKAKGVIMRRNANYHPNIWGDRFINYVPVDKMNHTCHLQAIEELKDAVRRELLTATGLSQLNLIDAIQRLGVGYHFERELEEALQHVYHKNHYHDDTEDNLYSISLRFRLLRQHGYYVSCDILNKFKDEKDNFKESLTTDVPGMLSLYEAAHPGVHGEDILDEAIAFTTTHLKSLAIDHLRNPSLASQVIHALRQPLHRGVPRLENRRYISIYQDEVSHNKALVKLFKLDFNLVQSLHKKELSEISRWWKELDLANKLPFARDRLVECYFWIIGVYYEPQYSLARKILTKTIAMGSIIDDIYDVYGTPEELNLFTDAIERWDASCMDQLPEYMQIFYEALLDLYNEIEKEIAKEGWSYRVHYAKEAMKILARGYHDESKWFHNNYIPTMEEYMHVALVTSGYTMLTTSSFLGMDNIVTKETFDWVFSGPKIIRASGTIARLMDDVKSHKFEQERGHAASAVECYMEQHGVSEQEVCKEFYQQVGNAWKDINQDFLKPTDVPMTILMRVLNLARVIDVVYKEGDGYTHVGKVMKENVASLLIDPIPV.

The Mg(2+) site is built by Asp309, Asp313, Asp453, and Glu461. The short motif at 309–313 (DDIYD) is the DDXXD motif element.

The protein belongs to the terpene synthase family. Tpsa subfamily. It depends on Mg(2+) as a cofactor. Requires Mn(2+) as cofactor. In terms of tissue distribution, mostly expressed in roots and mature leaflets and, to a lower extent, in rachis and developing leaflets.

It carries out the reaction (2E,6E)-farnesyl diphosphate = alpha-humulene + diphosphate. The catalysed reaction is (2E,6E)-farnesyl diphosphate = alpha-selinene + diphosphate. The enzyme catalyses (2E,6E)-farnesyl diphosphate = delta-cadinene + diphosphate. It catalyses the reaction (2E,6E)-farnesyl diphosphate = (1S,2S,4R)-beta-elemene + diphosphate. Its pathway is secondary metabolite biosynthesis; terpenoid biosynthesis. In terms of biological role, sesquiterpene synthase involved in the biosynthesis of volatile compounds known for their medicinal efficacy for treating enteritis, dysentery, itch and some cancers. Mediates the conversion of (2E,6E)-farnesyl diphosphate (FPP) into beta-elemene, alpha-humulene, delta-cadinene and alpha-selinene. This is Sesquiterpene synthase 2 from Toona sinensis (Chinese mahogany).